We begin with the raw amino-acid sequence, 196 residues long: DnaA initiator-associating protein DiaA (196 aa).

One can recognise an SIS domain in the interval 34–196 (LVQSLLNGNK…DNTLFPHQND (163 aa)).

Belongs to the SIS family. DiaA subfamily. In terms of assembly, homotetramer; dimer of dimers.

In terms of biological role, required for the timely initiation of chromosomal replication via direct interactions with the DnaA initiator protein. The protein is DnaA initiator-associating protein DiaA of Yersinia pestis bv. Antiqua (strain Antiqua).